Here is a 435-residue protein sequence, read N- to C-terminus: MGIMGSLWPWILTMLSLLGLSMGAPSASRCSGVCSTSVPEGFTPEGSPVFQDKDIPAINQGLISEETPESSFLVEGDIIRPSPFRLLSVTNNKWPKGVGGFVEIPFLLSRKYDELSRRVIMDAFAEFERFTCIRFVAYHGQRDFVSILPMAGCFSGVGRSGGMQVVSLAPTCLRKGRGIVLHELMHVLGFWHEHSRADRDRYIQVNWNEILPGFEINFIKSRSTNMLVPYDYSSVMHYGRFAFSWRGQPTIIPLWTSSVHIGQRWNLSTSDITRVCRLYNCSRSVPDSHGRGFEAQSDGSSLTPASISRLQRLLEALSEESGSSAPSGSRTGGQSIAGLGNSQQGWEHPPQSTFSVGALARPPQMLADASKSGPGAGADSLSLEQFQLAQAPTVPLALFPEARDKPAPIQDAFERLAPLPGGCAPGSHIREVPRD.

The signal sequence occupies residues M1 to G23. In terms of domain architecture, Peptidase M12A spans R85–S282. 2 cysteine pairs are disulfide-bonded: C132–C281 and C153–C172. H182 serves as a coordination point for Zn(2+). The active site involves E183. 2 residues coordinate Zn(2+): H186 and H192. Low complexity predominate over residues S318–S329. A disordered region spans residues S318–V356. A compositionally biased stretch (polar residues) spans G340–S355.

Interacts (via N-terminal domain) with SPACA3; the interaction occurs during fertilization. Requires Zn(2+) as cofactor. Ovary-specific. Expressed in secondary, antral and Graafian follicle oocytes. Expressed in the egg cells. Not detected in two-cell embryos. Not detected in naked oocytes, oocytes in primordial or unilaminar primary follicles, or in any other ovarian cells at pre-pubertal, pubertal or adult stages (at protein level). Ovary-specific.

It localises to the cytoplasm. The protein localises to the cell membrane. Its subcellular location is the cytoplasmic vesicle. The protein resides in the secretory vesicle. It is found in the cortical granule. Its activity is regulated as follows. Inhibited by wide spectrum metalloproteinase inhibitor batimastat (BB-94). Also inhibited by EDTA. In terms of biological role, oocyte-specific oolemmal receptor involved in sperm and egg adhesion and fertilization. Plays a role in the polyspermy inhibition. Probably acts as a protease for the post-fertilization cleavage of ZP2. Cleaves the sperm-binding ZP2 at the surface of the zona pellucida after fertilization and cortical granule exocytosis, rendering the zona pellucida unable to support further sperm binding. The sequence is that of Astacin-like metalloendopeptidase from Mus musculus (Mouse).